A 136-amino-acid chain; its full sequence is Small ribosomal subunit protein eS17A (136 aa).

The protein belongs to the eukaryotic ribosomal protein eS17 family. As to quaternary structure, component of the small ribosomal subunit (SSU). Mature yeast ribosomes consist of a small (40S) and a large (60S) subunit. The 40S small subunit contains 1 molecule of ribosomal RNA (18S rRNA) and 33 different proteins (encoded by 57 genes). The large 60S subunit contains 3 rRNA molecules (25S, 5.8S and 5S rRNA) and 46 different proteins (encoded by 81 genes).

The protein localises to the cytoplasm. In terms of biological role, component of the ribosome, a large ribonucleoprotein complex responsible for the synthesis of proteins in the cell. The small ribosomal subunit (SSU) binds messenger RNAs (mRNAs) and translates the encoded message by selecting cognate aminoacyl-transfer RNA (tRNA) molecules. The large subunit (LSU) contains the ribosomal catalytic site termed the peptidyl transferase center (PTC), which catalyzes the formation of peptide bonds, thereby polymerizing the amino acids delivered by tRNAs into a polypeptide chain. The nascent polypeptides leave the ribosome through a tunnel in the LSU and interact with protein factors that function in enzymatic processing, targeting, and the membrane insertion of nascent chains at the exit of the ribosomal tunnel. The polypeptide is Small ribosomal subunit protein eS17A (Saccharomyces cerevisiae (strain ATCC 204508 / S288c) (Baker's yeast)).